The chain runs to 542 residues: Glutamyl-tRNA(Gln) amidotransferase subunit B, mitochondrial (542 aa).

Belongs to the GatB/GatE family. GatB subfamily. Subunit of the heterotrimeric GatFAB amidotransferase (AdT) complex, composed of A, B and F subunits.

Its subcellular location is the mitochondrion. It carries out the reaction L-glutamyl-tRNA(Gln) + L-glutamine + ATP + H2O = L-glutaminyl-tRNA(Gln) + L-glutamate + ADP + phosphate + H(+). Functionally, allows the formation of correctly charged Gln-tRNA(Gln) through the transamidation of misacylated Glu-tRNA(Gln) in the mitochondria. The reaction takes place in the presence of glutamine and ATP through an activated gamma-phospho-Glu-tRNA(Gln). In Candida glabrata (strain ATCC 2001 / BCRC 20586 / JCM 3761 / NBRC 0622 / NRRL Y-65 / CBS 138) (Yeast), this protein is Glutamyl-tRNA(Gln) amidotransferase subunit B, mitochondrial.